The chain runs to 428 residues: UPF0229 protein YeaH (428 aa).

Positions Gly78–Arg90 are enriched in basic and acidic residues. Residues Gly78–Glu111 are disordered. The segment covering Gln92 to Gln103 has biased composition (gly residues).

This sequence belongs to the UPF0229 family.

In Salmonella paratyphi C (strain RKS4594), this protein is UPF0229 protein YeaH.